We begin with the raw amino-acid sequence, 219 residues long: uncharacterized protein (219 aa).

To T.pallidum TP_0126.

This is an uncharacterized protein from Treponema pallidum (strain Nichols).